We begin with the raw amino-acid sequence, 212 residues long: Redox-sensing transcriptional repressor Rex (212 aa).

Residues 18 to 57 (LYYRFVNTLKSKGIDRVNSKAISEALNIESATIRRDFSYF) constitute a DNA-binding region (H-T-H motif). 92–97 (GVGNLG) lines the NAD(+) pocket.

This sequence belongs to the transcriptional regulatory Rex family. As to quaternary structure, homodimer.

The protein localises to the cytoplasm. In terms of biological role, modulates transcription in response to changes in cellular NADH/NAD(+) redox state. This Staphylococcus haemolyticus (strain JCSC1435) protein is Redox-sensing transcriptional repressor Rex.